We begin with the raw amino-acid sequence, 134 residues long: Small ribosomal subunit protein bS6 (134 aa).

This sequence belongs to the bacterial ribosomal protein bS6 family.

Binds together with bS18 to 16S ribosomal RNA. This chain is Small ribosomal subunit protein bS6, found in Pelodictyon phaeoclathratiforme (strain DSM 5477 / BU-1).